The sequence spans 475 residues: Cytosolic non-specific dipeptidase (475 aa).

An N-acetylalanine modification is found at alanine 2. Residue lysine 9 is modified to N6-acetyllysine. At serine 58 the chain carries Phosphoserine. Histidine 99 lines the Mn(2+) pocket. The active site involves aspartate 101. Position 132 (aspartate 132) interacts with Mn(2+). The Proton acceptor role is filled by glutamate 166. Substrate is bound by residues 166 to 167, aspartate 195, and histidine 228; that span reads EE. Mn(2+) is bound by residues glutamate 167 and aspartate 195. Serine 299 is modified (phosphoserine). Substrate contacts are provided by threonine 330, arginine 343, serine 417, and histidine 445. Residue histidine 445 coordinates Mn(2+).

The protein belongs to the peptidase M20A family. Homodimer. Mn(2+) serves as cofactor. Ubiquitously expressed with higher levels in kidney and liver (at protein level). Expressed in peripheral blood leukocytes. Expressed in gastric mucosa and down-regulated in gastric cancer mucosal tissues (at protein level). As to expression, broadly expressed in fetal tissues. Expressed in adult liver and placenta.

The protein localises to the cytoplasm. The catalysed reaction is Hydrolysis of dipeptides, preferentially hydrophobic dipeptides including prolyl amino acids.. It carries out the reaction L-threonyl-L-threonine + H2O = 2 L-threonine. The enzyme catalyses L-threonyl-L-serine + H2O = L-threonine + L-serine. It catalyses the reaction L-seryl-L-threonine + H2O = L-threonine + L-serine. The catalysed reaction is L-cysteinylglycine + H2O = L-cysteine + glycine. It carries out the reaction L-alanyl-L-cysteine + H2O = L-cysteine + L-alanine. The enzyme catalyses (S)-lactate + L-phenylalanine = N-[(S)-lactoyl]-L-phenylalanine + H2O. Its activity is regulated as follows. Inhibited by p-hydroxymercurybenzoate. The inhibitory concentration 50% (IC(50)) is 13 uM. Inhibited by bestatin. The inhibitory concentration 50% (IC(50)) is 7 nM at pH 9.5. In terms of biological role, catalyzes the peptide bond hydrolysis in dipeptides, displaying a non-redundant activity toward threonyl dipeptides. Mediates threonyl dipeptide catabolism in a tissue-specific way. Has high dipeptidase activity toward cysteinylglycine, an intermediate metabolite in glutathione metabolism. Metabolizes N-lactoyl-amino acids, both through hydrolysis to form lactic acid and amino acids, as well as through their formation by reverse proteolysis. Plays a role in the regulation of cell cycle arrest and apoptosis. In Homo sapiens (Human), this protein is Cytosolic non-specific dipeptidase.